Consider the following 391-residue polypeptide: Calcium-binding and spermatid-specific protein 1 (391 aa).

Disordered regions lie at residues 1–23 (MAEDGSPKIYSRPPRDNSKTPTE), 90–110 (PEKEITTPTETPNSKPKGSIT), and 152–221 (KEVV…KEVT). The segment covering 90 to 101 (PEKEITTPTETP) has biased composition (low complexity). S253 and S269 each carry phosphoserine. The tract at residues 271-299 (EKAKDNVEDPLNDEESTDGANDWMEKETA) is disordered. Positions 278–287 (EDPLNDEEST) are enriched in acidic residues. Phosphoserine is present on residues S314, S347, S357, S372, and S376. Residues 330–351 (EESHVNTTDLPENETTESVTNV) are disordered.

Detected only in testis. Expressed from stages X to VIII of the seminiferous epithelial cycle. Expressed from step 13 to step 16 of spermatid development (at protein level).

It is found in the cytoplasm. Its subcellular location is the mitochondrion inner membrane. The protein resides in the cell projection. The protein localises to the cilium. It localises to the flagellum. It is found in the cytoplasmic vesicle. Its subcellular location is the secretory vesicle. The protein resides in the acrosome. In terms of biological role, calcium-binding protein. Essential for maintaining the structural integrity of the sperm flagella. This chain is Calcium-binding and spermatid-specific protein 1 (Cabs1), found in Mus musculus (Mouse).